A 232-amino-acid polypeptide reads, in one-letter code: Probable thiopurine S-methyltransferase (232 aa).

Residues W14–F25, L54, E75, and R137 contribute to the S-adenosyl-L-methionine site. F25 lines the substrate pocket.

Belongs to the class I-like SAM-binding methyltransferase superfamily. TPMT family.

The protein localises to the cytoplasm. It catalyses the reaction S-adenosyl-L-methionine + a thiopurine = S-adenosyl-L-homocysteine + a thiopurine S-methylether.. This chain is Probable thiopurine S-methyltransferase (tpmt), found in Danio rerio (Zebrafish).